A 661-amino-acid polypeptide reads, in one-letter code: Coagulation factor XIII B chain (661 aa).

The N-terminal stretch at M1–A20 is a signal peptide. 10 Sushi domains span residues P24 to F88, K89 to K148, E151 to K210, L211 to G269, N272 to E329, V334 to E391, E394 to E452, P453 to T516, G522 to E580, and P581 to I647. 20 disulfides stabilise this stretch: C25–C76, C59–C87, C91–C135, C118–C146, C153–C197, C180–C208, C213–C255, C241–C267, C274–C316, C302–C327, C336–C378, C364–C389, C396–C439, C425–C450, C454–C505, C486–C515, C524–C567, C553–C578, C582–C636, and C616–C646. N162 is a glycosylation site (N-linked (GlcNAc...) asparagine). An N-linked (GlcNAc...) asparagine glycan is attached at N545. A Cell attachment site motif is present at residues R617–D619.

As to quaternary structure, tetramer of two A chains (F13A1) and two B (F13B) chains.

The protein localises to the secreted. Its function is as follows. The B chain of factor XIII is not catalytically active, but is thought to stabilize the A subunits and regulate the rate of transglutaminase formation by thrombin. In Homo sapiens (Human), this protein is Coagulation factor XIII B chain (F13B).